We begin with the raw amino-acid sequence, 1057 residues long: MTSTIPTPPSIPFLGHVASIEREVPLRSFRLLSEQYGEIYELNILGRKLLVVSSAKLMSDVSDDKNFYKNMSGPLLQVRNAVGDGLFTAYGEEPNWGIAHRLLMPAFGTASIRDMFPDMLDLASQLVLKWERFGPKHRIDPAEDFTRLTLDTIALCAMSYRLNSFYRDSSHPFVQSMVDFLVECNLRANRPGLLTSVMVQTNAKYEEDIKTMTELADEIIAERRRNPTDKKDLLNIMLYSKDPKTGQSLSDVNIRNNLLTFLIAGHEPTSGLLTFALYYLIKNPEAMRKAHEEVDEVLGDQQIQLTDIGKLKYIDAILRETMRLSPTAPMRTVRPFEDITIGDGKYFVPKDYTVVINTIVAQRDPTVWGEDSNEFHPERMLDGKFEALPPNAWQPFGFGMRACIGRPFAWQEAIIALAVLLQKFDFVLDDPSYELELKQSLTIKPAHFYVHALPREGKPQLLATPSAAPFSSHARETTNASLPASPGTEAKQPMYVLYGSNTGTSESFAQRIANGAAARGFRATLGTLDSVADHLPTDGPIVIVCASFEGEPADNAAHFVERLTSLQDKPLQNLRFAVFGCGHHDWFRTYQRIPKLIDQTLEDRGAQRLVPRGEGDAGSSEFFEAFEAWETKLWEVLPEEYNTVVKQDITSGLKVETVGEGATRAVDLRQHDAALGTVIENRVLTAPGAPQKRHIEFELPEGVTSRAGDYLAILPSNPPQDVHRVLARFGMLPEQQIVISSSGPSSLPTGRQISAFDLLSGYVELSQPATARDVRTLLNVESSDATKESLKALLESYSDAVLGRRLSILDLLEQYPDIKLLFAAYLALLPSMRTRQYSISSSPLWNAQRVTLTVSVLEAPALSGRKEPFLGVASTYLANLRPGDKVQMAVRASNAAFHLPQDPRTPLVLFAAGSGLAPMRGFLQERALQKKAGREVGRAVLFFGCRSPDEDYLYSDSDLKEWEELGVVELRPAFSRALEKSEGCKYVQDRVWHDRRALDGLYEAGAKWFVCGSGKVARGVKEVLTAMIKESRGYSDEEAAAAFERATVGRFATDIFE.

C403 contributes to the heme binding site. The tract at residues 465 to 488 (PSAAPFSSHARETTNASLPASPGT) is disordered. The Flavodoxin-like domain maps to 494-634 (MYVLYGSNTG…AFEAWETKLW (141 aa)). FMN contacts are provided by residues 500–504 (SNTGT) and 578–610 (VFGCGHHDWFRTYQRIPKLIDQTLEDRGAQRLV). Residues 671–900 (HDAALGTVIE…RASNAAFHLP (230 aa)) form the FAD-binding FR-type domain.

The protein in the N-terminal section; belongs to the cytochrome P450 family. FAD is required as a cofactor. The cofactor is FMN. Heme serves as cofactor.

It catalyses the reaction 2 oxidized [cytochrome P450] + NADPH = 2 reduced [cytochrome P450] + NADP(+) + H(+). The enzyme catalyses an organic molecule + reduced [NADPH--hemoprotein reductase] + O2 = an alcohol + oxidized [NADPH--hemoprotein reductase] + H2O + H(+). It carries out the reaction dodecan-1-ol + reduced [NADPH--hemoprotein reductase] + O2 = 1,5-dodecanediol + oxidized [NADPH--hemoprotein reductase] + H2O + H(+). The catalysed reaction is dodecan-1-ol + reduced [NADPH--hemoprotein reductase] + O2 = 1,6-dodecanediol + oxidized [NADPH--hemoprotein reductase] + H2O + H(+). In terms of biological role, self-sufficient cytochrome P450 monooxygenase that catalyzes the regioselective in-chain hydroxylation of fatty alcohols (C9-15) as well as fatty acids (C9-15) at the omega-1 to omega-7 or omega-1 to omega-6 positions, respectively. Is also able to convert naphthalene to 1-naphthol and 1-naphthol further to 1,3-dihydroxynaphthalene. This chain is Self-sufficient cytochrome P450 monooxygenase CYP505E3, found in Phanerodontia chrysosporium (White-rot fungus).